The primary structure comprises 147 residues: Bis(5'-nucleosyl)-tetraphosphatase [asymmetrical] (147 aa).

An N-acetylalanine modification is found at Ala2. In terms of domain architecture, Nudix hydrolase spans 2–139 (ALRACGLIIF…DMKAVLQEGH (138 aa)). The Nudix box signature appears at 43-64 (GHVEPGESDLQTALRETQEEAG).

The protein belongs to the Nudix hydrolase family. A divalent metal cation serves as cofactor.

The catalysed reaction is P(1),P(4)-bis(5'-guanosyl) tetraphosphate + H2O = GMP + GTP + 2 H(+). It carries out the reaction a 5'-end CoA-ribonucleoside in mRNA + H2O = a 5'-end phospho-adenosine-phospho-ribonucleoside in mRNA + (R)-4'-phosphopantetheine + 2 H(+). The enzyme catalyses a 5'-end FAD-phospho-ribonucleoside in mRNA + H2O = a 5'-end phospho-adenosine-phospho-ribonucleoside in mRNA + FMN + 2 H(+). With respect to regulation, inhibited by fluoride ions. Its function is as follows. Catalyzes the asymmetric hydrolysis of diadenosine 5',5'''-P1,P4-tetraphosphate (Ap4A) to yield AMP and ATP. Exhibits decapping activity towards FAD-capped RNAs and dpCoA-capped RNAs in vitro. This chain is Bis(5'-nucleosyl)-tetraphosphatase [asymmetrical] (NUDT2), found in Sus scrofa (Pig).